Reading from the N-terminus, the 299-residue chain is Putative adenosine/adenine deaminase (299 aa).

The Zn(2+) site is built by H16 and H18. The substrate site is built by H18 and G157. H184 provides a ligand contact to Zn(2+). The active-site Proton donor is the E187. D265 serves as a coordination point for Zn(2+). D266 provides a ligand contact to substrate.

It belongs to the metallo-dependent hydrolases superfamily. Adenosine and AMP deaminases family. Zn(2+) serves as cofactor.

Putative nucleoside deaminase. May catalyze the hydrolytic deamination of adenosine or some similar substrate and play a role in purine metabolism. The polypeptide is Putative adenosine/adenine deaminase (Treponema pallidum (strain Nichols)).